The sequence spans 286 residues: Ribose-phosphate pyrophosphokinase (286 aa).

Residues D34 to E36 and R91 to Q92 contribute to the ATP site. Positions 124 and 161 each coordinate Mg(2+). The active site involves K184. Residues R186, D210, and S214 to T218 each bind D-ribose 5-phosphate.

Belongs to the ribose-phosphate pyrophosphokinase family. Class III (archaeal) subfamily. Mg(2+) is required as a cofactor.

The protein localises to the cytoplasm. It catalyses the reaction D-ribose 5-phosphate + ATP = 5-phospho-alpha-D-ribose 1-diphosphate + AMP + H(+). Its pathway is metabolic intermediate biosynthesis; 5-phospho-alpha-D-ribose 1-diphosphate biosynthesis; 5-phospho-alpha-D-ribose 1-diphosphate from D-ribose 5-phosphate (route I): step 1/1. In terms of biological role, involved in the biosynthesis of the central metabolite phospho-alpha-D-ribosyl-1-pyrophosphate (PRPP) via the transfer of pyrophosphoryl group from ATP to 1-hydroxyl of ribose-5-phosphate (Rib-5-P). The protein is Ribose-phosphate pyrophosphokinase of Thermoplasma acidophilum (strain ATCC 25905 / DSM 1728 / JCM 9062 / NBRC 15155 / AMRC-C165).